A 127-amino-acid polypeptide reads, in one-letter code: Glycine cleavage system H protein (127 aa).

A Lipoyl-binding domain is found at 24–105; it reads TALVGITDFA…YGEGWMVKMK (82 aa). N6-lipoyllysine is present on lysine 65.

Belongs to the GcvH family. As to quaternary structure, the glycine cleavage system is composed of four proteins: P, T, L and H. Requires (R)-lipoate as cofactor.

In terms of biological role, the glycine cleavage system catalyzes the degradation of glycine. The H protein shuttles the methylamine group of glycine from the P protein to the T protein. In Chlorobium phaeovibrioides (strain DSM 265 / 1930) (Prosthecochloris vibrioformis (strain DSM 265)), this protein is Glycine cleavage system H protein.